A 1059-amino-acid polypeptide reads, in one-letter code: Protein OPAQUE10 (1059 aa).

Repeat copies occupy residues 269 to 342 (SLLE…KESC), 343 to 416 (SLLE…KESC), 417 to 490 (SPLE…KESC), 491 to 564 (SPLE…KESC), 565 to 638 (FPLE…KESC), 639 to 712 (SPLE…KESC), and 713 to 786 (SPLE…KESC). Residues 269 to 786 (SLLEPEDSVN…SRPIHDKESC (518 aa)) are 7 X approximate repeats. Positions 511–534 (FNDAPNKESEGYGESGRGKHGEKS) are disordered. Residues 515–534 (PNKESEGYGESGRGKHGEKS) are compositionally biased toward basic and acidic residues. 3 disordered regions span residues 732 to 756 (QYSD…EEKS), 856 to 875 (ETLA…DTGT), and 889 to 998 (SVCS…SGKG). A compositionally biased stretch (basic and acidic residues) spans 858-869 (LADHPKKEEAGL). Polar residues-rich tracts occupy residues 907 to 924 (DFSS…NTGG) and 945 to 958 (ASDS…PEAS). A compositionally biased stretch (basic and acidic residues) spans 984 to 994 (TRGRPEGDAPR). The chain crosses the membrane as a helical span at residues 1003 to 1023 (VAGGITLVGAVFFMFHLSAAL).

Homodimer. Interacts (via N-terminus) with FL1 (via C-terminus), HIP, 19 kDa alpha-zein (AC P06677), 22 kDa alpha-zein (AC O48966), 16 kDa gamma-zein (AC P08031) and 50 kDa gamma-zein (AC C0P381). Expressed in kernels.

It localises to the endoplasmic reticulum membrane. Functionally, cereal endosperm protein required for the ring-shaped distribution of 22 kDa alpha- and 16 kDa gamma-zeins in protein bodies. This chain is Protein OPAQUE10, found in Zea mays (Maize).